We begin with the raw amino-acid sequence, 252 residues long: MRRRIVAGNWKMNGSKDLVKQLVGAVREQSGSVGEDVEVVIIPPAIYLDQVAEQGGGRITTGAQNVSQWQSGAYTGEISAEMARDMGCGYVLVGHSERRQLFGETDSVAAAKVEQVLLSGLVAVLCVGETLAEREADQAEAVVAEQVRSGLSVVADGQWSRVVVAYEPVWAIGTGKTATADDAQAMHSEIRKVLDGMNAPANEISVLYGGSVKADNAAALFAEPDIDGGLIGGASLKAEEFISICRSFPAGV.

9–11 (NWK) is a substrate binding site. Histidine 95 serves as the catalytic Electrophile. Glutamate 167 acts as the Proton acceptor in catalysis. Substrate contacts are provided by residues glycine 173, serine 211, and 232-233 (GG).

The protein belongs to the triosephosphate isomerase family. As to quaternary structure, homodimer.

The protein resides in the cytoplasm. It catalyses the reaction D-glyceraldehyde 3-phosphate = dihydroxyacetone phosphate. Its pathway is carbohydrate biosynthesis; gluconeogenesis. It participates in carbohydrate degradation; glycolysis; D-glyceraldehyde 3-phosphate from glycerone phosphate: step 1/1. Involved in the gluconeogenesis. Catalyzes stereospecifically the conversion of dihydroxyacetone phosphate (DHAP) to D-glyceraldehyde-3-phosphate (G3P). In Marinobacter nauticus (strain ATCC 700491 / DSM 11845 / VT8) (Marinobacter aquaeolei), this protein is Triosephosphate isomerase.